The primary structure comprises 773 residues: 4'-phosphopantetheine phosphatase (773 aa).

N-acetylalanine is present on Ala-2. Residues 2–402 (AECGASGSGS…SPELGPAQRA (401 aa)) are pantothenate kinase. Residues Ser-196 and Ser-199 each contribute to the acetyl-CoA site. The residue at position 320 (Tyr-320) is a 3'-nitrotyrosine. Residues Ser-393 and Ser-404 each carry the phosphoserine modification. The tract at residues 403 to 773 (RSGTFDLLEM…VIFKYEVPAE (371 aa)) is 4'-phosphopantetheine phosphatase. A Phosphothreonine modification is found at Thr-406. Mn(2+) contacts are provided by Asp-623, Asn-624, and Asp-659. Residues 724–728 (EGMGR) carry the Subfamily II EGMGR motif motif.

This sequence in the N-terminal section; belongs to the type II pantothenate kinase family. In the C-terminal section; belongs to the damage-control phosphatase family. Phosphopantetheine phosphatase II subfamily. In terms of assembly, homodimer. Interacts with PKM. It depends on Mn(2+) as a cofactor. Requires Ni(2+) as cofactor. As to expression, widely expressed with high expression in the muscle. Expressed in the retina and lens epithelium, mainly in ganglion cell layer, outer plexiform layer and retinal pigment layer (at protein level).

It is found in the cytoplasm. It catalyses the reaction (R)-4'-phosphopantetheine + H2O = (R)-pantetheine + phosphate. The catalysed reaction is (R)-4'-phosphopantetheine sulfonate + H2O = (R)-pantetheine sulfonate + phosphate. The enzyme catalyses (R)-4'-phospho-S-sulfopantetheine + H2O = (R)-S-sulfopantetheine + phosphate. With respect to regulation, activity is strongly promoted by Co(2+), Ni(2+), Mg(2+) and Mn(2+). Activity is inhibited by EDTA. Functionally, phosphatase which shows a preference for 4'-phosphopantetheine and its oxidatively damaged forms (sulfonate or S-sulfonate), providing strong indirect evidence that the phosphatase activity pre-empts damage in the coenzyme A (CoA) pathway. Hydrolyzing excess 4'-phosphopantetheine could constitute a directed overflow mechanism to prevent its oxidation to the S-sulfonate, sulfonate, or other forms. Hydrolyzing 4'-phosphopantetheine sulfonate or S-sulfonate would forestall their conversion to inactive forms of CoA and acyl carrier protein. May play a role in the physiological regulation of CoA intracellular levels. This chain is 4'-phosphopantetheine phosphatase, found in Homo sapiens (Human).